Reading from the N-terminus, the 367-residue chain is Palmitoyltransferase ZDHHC2 (367 aa).

Topologically, residues 1-16 are cytoplasmic; sequence MAPSGPGSSARRRCRR. The helical transmembrane segment at 17 to 37 threads the bilayer; sequence VLYWIPVVFITLLLGWSYYAY. Residues 38–54 lie on the Lumenal side of the membrane; it reads AIQLCIVSMENTGEQVV. A helical transmembrane segment spans residues 55–75; it reads CLMAYHLLFAMFVWSYWKTIF. Topologically, residues 76–170 are cytoplasmic; the sequence is TLPMNPSKEF…NNCVGFSNYK (95 aa). The 51-residue stretch at 127 to 177 folds into the DHHC domain; it reads RYCDRCQLIKPDRCHHCSVCDKCILKMDHHCPWVNNCVGFSNYKFFLLFLA. The active-site S-palmitoyl cysteine intermediate is the cysteine 157. The helical transmembrane segment at 171–191 threads the bilayer; the sequence is FFLLFLAYSLLYCLFIAATDL. The Lumenal segment spans residues 192-208; the sequence is QYFIKFWTNGLPDTQAK. The helical transmembrane segment at 209 to 229 threads the bilayer; the sequence is FHIMFLFFAAAMFSVSLSSLF. Residues 230–367 lie on the Cytoplasmic side of the membrane; it reads GYHCWLVSKN…NPALTMENET (138 aa). Residues 299–367 form a mediates localization to plasma membrane and recycling endosomes region; it reads NQDPEQASTP…NPALTMENET (69 aa). The interval 330–367 is disordered; it reads ESQSHLLTDSQSWTESSINPGKCKAGMSNPALTMENET. Residues 333-348 show a composition bias toward polar residues; it reads SHLLTDSQSWTESSIN. Residues 335 to 336 carry the Non-canonical dileucine endocytic signal motif; sequence LL. Serine 341 is modified (phosphoserine). The short motif at 358 to 361 is the NPxY-like endocytic signal element; the sequence is NPAL.

This sequence belongs to the DHHC palmitoyltransferase family. Monomer. Homodimer. The monomeric form has a higher catalytic activity. In terms of processing, autopalmitoylated. As to expression, ubiquitously expressed. Reduced expression in colorectal cancers with liver metastasis.

It localises to the postsynaptic density. Its subcellular location is the postsynaptic recycling endosome membrane. It is found in the cell membrane. The protein localises to the endoplasmic reticulum membrane. The protein resides in the golgi apparatus membrane. It catalyses the reaction L-cysteinyl-[protein] + hexadecanoyl-CoA = S-hexadecanoyl-L-cysteinyl-[protein] + CoA. The catalysed reaction is L-cysteinyl-[protein] + tetradecanoyl-CoA = S-tetradecanoyl-L-cysteinyl-[protein] + CoA. It carries out the reaction L-cysteinyl-[protein] + octadecanoyl-CoA = S-octadecanoyl-L-cysteinyl-[protein] + CoA. In terms of biological role, palmitoyltransferase that catalyzes the addition of palmitate onto various protein substrates and is involved in a variety of cellular processes. Has no stringent fatty acid selectivity and in addition to palmitate can also transfer onto target proteins myristate from tetradecanoyl-CoA and stearate from octadecanoyl-CoA. In the nervous system, plays a role in long term synaptic potentiation by palmitoylating AKAP5 through which it regulates protein trafficking from the dendritic recycling endosomes to the plasma membrane and controls both structural and functional plasticity at excitatory synapses. In dendrites, mediates the palmitoylation of DLG4 when synaptic activity decreases and induces synaptic clustering of DLG4 and associated AMPA-type glutamate receptors. Also mediates the de novo and turnover palmitoylation of RGS7BP, a shuttle for Gi/o-specific GTPase-activating proteins/GAPs, promoting its localization to the plasma membrane in response to the activation of G protein-coupled receptors. Through the localization of these GTPase-activating proteins/GAPs, it also probably plays a role in G protein-coupled receptors signaling in neurons. Also probably plays a role in cell adhesion by palmitoylating CD9 and CD151 to regulate their expression and function. Palmitoylates the endoplasmic reticulum protein CKAP4 and regulates its localization to the plasma membrane. Could also palmitoylate LCK and regulate its localization to the plasma membrane. Functionally, (Microbial infection) Promotes Chikungunya virus (CHIKV) replication by mediating viral nsp1 palmitoylation. The chain is Palmitoyltransferase ZDHHC2 from Homo sapiens (Human).